A 112-amino-acid polypeptide reads, in one-letter code: Conotoxin vil14.5 (112 aa).

A signal peptide spans 1-22 (MGFRVLVLVVMATTSALPFTFS). The propeptide occupies 23–85 (EEPGRSPFRP…FAELSVGQRR (63 aa)). Residues 53 to 74 (RADGQPPDMRQPEMRRPEVRQP) form a disordered region. Positions 62 to 74 (RQPEMRRPEVRQP) are enriched in basic and acidic residues. 2 disulfide bridges follow: Cys-91–Cys-111 and Cys-95–Cys-107.

It belongs to the conotoxin R superfamily. Expressed by the venom duct.

The protein localises to the secreted. This chain is Conotoxin vil14.5, found in Conus villepinii (Villepin's cone).